The primary structure comprises 81 residues: Photosystem I iron-sulfur center (81 aa).

4Fe-4S ferredoxin-type domains follow at residues 2-31 (AHSVKIYDTCIGCTQCVRACPTDVLEMIPW) and 39-68 (IASAPRTEDCVGCKRCESACPTDFLSVRVY). [4Fe-4S] cluster contacts are provided by Cys-11, Cys-14, Cys-17, Cys-21, Cys-48, Cys-51, Cys-54, and Cys-58.

As to quaternary structure, the eukaryotic PSI reaction center is composed of at least 11 subunits. Requires [4Fe-4S] cluster as cofactor.

It localises to the plastid. The protein resides in the chloroplast thylakoid membrane. The enzyme catalyses reduced [plastocyanin] + hnu + oxidized [2Fe-2S]-[ferredoxin] = oxidized [plastocyanin] + reduced [2Fe-2S]-[ferredoxin]. Functionally, apoprotein for the two 4Fe-4S centers FA and FB of photosystem I (PSI); essential for photochemical activity. FB is the terminal electron acceptor of PSI, donating electrons to ferredoxin. The C-terminus interacts with PsaA/B/D and helps assemble the protein into the PSI complex. Required for binding of PsaD and PsaE to PSI. PSI is a plastocyanin-ferredoxin oxidoreductase, converting photonic excitation into a charge separation, which transfers an electron from the donor P700 chlorophyll pair to the spectroscopically characterized acceptors A0, A1, FX, FA and FB in turn. The polypeptide is Photosystem I iron-sulfur center (Psilotum nudum (Whisk fern)).